A 1057-amino-acid polypeptide reads, in one-letter code: Carbamoyl phosphate synthase large chain (1057 aa).

The segment at methionine 1–aspartate 401 is carboxyphosphate synthetic domain. Positions 129, 169, 175, 176, 208, 210, 215, 241, 242, 243, 284, and 298 each coordinate ATP. The region spanning arginine 133 to valine 327 is the ATP-grasp 1 domain. 3 residues coordinate Mg(2+): glutamine 284, glutamate 298, and asparagine 300. 3 residues coordinate Mn(2+): glutamine 284, glutamate 298, and asparagine 300. The interval isoleucine 402–serine 546 is oligomerization domain. A carbamoyl phosphate synthetic domain region spans residues isoleucine 547 to lysine 929. Positions asparagine 671 to leucine 861 constitute an ATP-grasp 2 domain. ATP contacts are provided by arginine 707, glutamine 746, leucine 748, glutamate 752, glycine 777, valine 778, histidine 779, serine 780, glutamine 820, and glutamate 832. 3 residues coordinate Mg(2+): glutamine 820, glutamate 832, and asparagine 834. Mn(2+) is bound by residues glutamine 820, glutamate 832, and asparagine 834. An MGS-like domain is found at methionine 930–leucine 1057. The interval methionine 930–leucine 1057 is allosteric domain.

It belongs to the CarB family. As to quaternary structure, composed of two chains; the small (or glutamine) chain promotes the hydrolysis of glutamine to ammonia, which is used by the large (or ammonia) chain to synthesize carbamoyl phosphate. Tetramer of heterodimers (alpha,beta)4. It depends on Mg(2+) as a cofactor. Mn(2+) serves as cofactor.

It carries out the reaction hydrogencarbonate + L-glutamine + 2 ATP + H2O = carbamoyl phosphate + L-glutamate + 2 ADP + phosphate + 2 H(+). The enzyme catalyses hydrogencarbonate + NH4(+) + 2 ATP = carbamoyl phosphate + 2 ADP + phosphate + 2 H(+). Its pathway is amino-acid biosynthesis; L-arginine biosynthesis; carbamoyl phosphate from bicarbonate: step 1/1. The protein operates within pyrimidine metabolism; UMP biosynthesis via de novo pathway; (S)-dihydroorotate from bicarbonate: step 1/3. Large subunit of the glutamine-dependent carbamoyl phosphate synthetase (CPSase). CPSase catalyzes the formation of carbamoyl phosphate from the ammonia moiety of glutamine, carbonate, and phosphate donated by ATP, constituting the first step of 2 biosynthetic pathways, one leading to arginine and/or urea and the other to pyrimidine nucleotides. The large subunit (synthetase) binds the substrates ammonia (free or transferred from glutamine from the small subunit), hydrogencarbonate and ATP and carries out an ATP-coupled ligase reaction, activating hydrogencarbonate by forming carboxy phosphate which reacts with ammonia to form carbamoyl phosphate. This Pediococcus pentosaceus (strain ATCC 25745 / CCUG 21536 / LMG 10740 / 183-1w) protein is Carbamoyl phosphate synthase large chain.